We begin with the raw amino-acid sequence, 593 residues long: NADH-quinone oxidoreductase subunit C/D (593 aa).

The NADH dehydrogenase I subunit C stretch occupies residues 1-184 (MTADTAVSIP…DPFSLTLAKQ (184 aa)). Positions 208-593 (DYMFLNLGPN…IDFVMADVDR (386 aa)) are NADH dehydrogenase I subunit D.

In the N-terminal section; belongs to the complex I 30 kDa subunit family. It in the C-terminal section; belongs to the complex I 49 kDa subunit family. As to quaternary structure, NDH-1 is composed of 13 different subunits. Subunits NuoB, CD, E, F, and G constitute the peripheral sector of the complex.

The protein localises to the cell inner membrane. It catalyses the reaction a quinone + NADH + 5 H(+)(in) = a quinol + NAD(+) + 4 H(+)(out). Its function is as follows. NDH-1 shuttles electrons from NADH, via FMN and iron-sulfur (Fe-S) centers, to quinones in the respiratory chain. The immediate electron acceptor for the enzyme in this species is believed to be ubiquinone. Couples the redox reaction to proton translocation (for every two electrons transferred, four hydrogen ions are translocated across the cytoplasmic membrane), and thus conserves the redox energy in a proton gradient. The chain is NADH-quinone oxidoreductase subunit C/D from Ectopseudomonas mendocina (strain ymp) (Pseudomonas mendocina).